A 433-amino-acid polypeptide reads, in one-letter code: Histone acetyltransferase type B subunit 2 (433 aa).

WD repeat units lie at residues 131–171 (EHPG…LDPT), 184–224 (GHEA…ADSR), 234–274 (HHTQ…TNKA), 281–321 (GHLD…EKVH), and 325–365 (GHND…EEQL). Residues 367–371 (DDQDD) are interaction with the histone H4 N-terminus. The stretch at 382–422 (GHTNHLADFSWNPNEPWLVASAAEDNLLQIWKVAESIVGKD) is one WD 6 repeat.

The protein belongs to the WD repeat RBAP46/RBAP48/MSI1 family. In terms of assembly, component of the HAT-B complex composed of at least HAT1 and HAT2. The HAT-B complex binds to histone H4 tail.

The protein localises to the cytoplasm. The protein resides in the nucleus. Its function is as follows. Regulatory subunit of the histone acetylase B (HAT-B) complex. The complex acetylates 'Lys-12' of histone H4 which is required for telomeric silencing. In Gibberella zeae (strain ATCC MYA-4620 / CBS 123657 / FGSC 9075 / NRRL 31084 / PH-1) (Wheat head blight fungus), this protein is Histone acetyltransferase type B subunit 2 (HAT2).